The primary structure comprises 272 residues: Putative phosphoenolpyruvate synthase regulatory protein (272 aa).

152–159 is an ADP binding site; it reads GVSRCGKT.

This sequence belongs to the pyruvate, phosphate/water dikinase regulatory protein family. PSRP subfamily.

It carries out the reaction [pyruvate, water dikinase] + ADP = [pyruvate, water dikinase]-phosphate + AMP + H(+). It catalyses the reaction [pyruvate, water dikinase]-phosphate + phosphate + H(+) = [pyruvate, water dikinase] + diphosphate. Its function is as follows. Bifunctional serine/threonine kinase and phosphorylase involved in the regulation of the phosphoenolpyruvate synthase (PEPS) by catalyzing its phosphorylation/dephosphorylation. The chain is Putative phosphoenolpyruvate synthase regulatory protein from Pseudomonas putida (strain ATCC 700007 / DSM 6899 / JCM 31910 / BCRC 17059 / LMG 24140 / F1).